The chain runs to 572 residues: Proline--tRNA ligase (572 aa).

It belongs to the class-II aminoacyl-tRNA synthetase family. ProS type 1 subfamily. Homodimer.

It is found in the cytoplasm. It catalyses the reaction tRNA(Pro) + L-proline + ATP = L-prolyl-tRNA(Pro) + AMP + diphosphate. In terms of biological role, catalyzes the attachment of proline to tRNA(Pro) in a two-step reaction: proline is first activated by ATP to form Pro-AMP and then transferred to the acceptor end of tRNA(Pro). As ProRS can inadvertently accommodate and process non-cognate amino acids such as alanine and cysteine, to avoid such errors it has two additional distinct editing activities against alanine. One activity is designated as 'pretransfer' editing and involves the tRNA(Pro)-independent hydrolysis of activated Ala-AMP. The other activity is designated 'posttransfer' editing and involves deacylation of mischarged Ala-tRNA(Pro). The misacylated Cys-tRNA(Pro) is not edited by ProRS. In Cronobacter sakazakii (strain ATCC BAA-894) (Enterobacter sakazakii), this protein is Proline--tRNA ligase.